A 364-amino-acid polypeptide reads, in one-letter code: Spermidine/putrescine import ATP-binding protein PotA (364 aa).

An ABC transporter domain is found at 10 to 244; it reads IEVVNVSKIF…PAERFVADFI (235 aa). 46-53 contacts ATP; the sequence is GPSGCGKT.

The protein belongs to the ABC transporter superfamily. Spermidine/putrescine importer (TC 3.A.1.11.1) family. In terms of assembly, the complex is composed of two ATP-binding proteins (PotA), two transmembrane proteins (PotB and PotC) and a solute-binding protein (PotD).

Its subcellular location is the cell inner membrane. It carries out the reaction ATP + H2O + polyamine-[polyamine-binding protein]Side 1 = ADP + phosphate + polyamineSide 2 + [polyamine-binding protein]Side 1.. Its function is as follows. Part of the ABC transporter complex PotABCD involved in spermidine/putrescine import. Responsible for energy coupling to the transport system. The chain is Spermidine/putrescine import ATP-binding protein PotA from Mesorhizobium japonicum (strain LMG 29417 / CECT 9101 / MAFF 303099) (Mesorhizobium loti (strain MAFF 303099)).